A 303-amino-acid chain; its full sequence is Coenzyme PQQ synthesis protein B (303 aa).

This sequence belongs to the PqqB family.

It functions in the pathway cofactor biosynthesis; pyrroloquinoline quinone biosynthesis. Functionally, may be involved in the transport of PQQ or its precursor to the periplasm. This chain is Coenzyme PQQ synthesis protein B, found in Acinetobacter baumannii (strain ACICU).